The chain runs to 345 residues: N-acetyl-gamma-glutamyl-phosphate reductase (345 aa).

Residue Cys149 is part of the active site.

This sequence belongs to the NAGSA dehydrogenase family. Type 1 subfamily.

The protein localises to the cytoplasm. The enzyme catalyses N-acetyl-L-glutamate 5-semialdehyde + phosphate + NADP(+) = N-acetyl-L-glutamyl 5-phosphate + NADPH + H(+). It functions in the pathway amino-acid biosynthesis; L-arginine biosynthesis; N(2)-acetyl-L-ornithine from L-glutamate: step 3/4. In terms of biological role, catalyzes the NADPH-dependent reduction of N-acetyl-5-glutamyl phosphate to yield N-acetyl-L-glutamate 5-semialdehyde. The sequence is that of N-acetyl-gamma-glutamyl-phosphate reductase from Janthinobacterium sp. (strain Marseille) (Minibacterium massiliensis).